We begin with the raw amino-acid sequence, 394 residues long: Cysteine desulfurase IscS (394 aa).

Pyridoxal 5'-phosphate-binding positions include 72–73 (GT), asparagine 152, glutamine 180, and 200–202 (SAH). Position 203 is an N6-(pyridoxal phosphate)lysine (lysine 203). Residue threonine 238 participates in pyridoxal 5'-phosphate binding. Cysteine 326 serves as the catalytic Cysteine persulfide intermediate. Residue cysteine 326 coordinates [2Fe-2S] cluster.

Belongs to the class-V pyridoxal-phosphate-dependent aminotransferase family. NifS/IscS subfamily. In terms of assembly, homodimer. Forms a heterotetramer with IscU, interacts with other sulfur acceptors. Pyridoxal 5'-phosphate serves as cofactor.

Its subcellular location is the cytoplasm. The catalysed reaction is (sulfur carrier)-H + L-cysteine = (sulfur carrier)-SH + L-alanine. It participates in cofactor biosynthesis; iron-sulfur cluster biosynthesis. Master enzyme that delivers sulfur to a number of partners involved in Fe-S cluster assembly, tRNA modification or cofactor biosynthesis. Catalyzes the removal of elemental sulfur atoms from cysteine to produce alanine. Functions as a sulfur delivery protein for Fe-S cluster synthesis onto IscU, an Fe-S scaffold assembly protein, as well as other S acceptor proteins. In Dictyoglomus turgidum (strain DSM 6724 / Z-1310), this protein is Cysteine desulfurase IscS.